The primary structure comprises 626 residues: Chaperone protein HtpG (626 aa).

Positions 1-329 (MSEETLSFQA…SSDLPLNVSR (329 aa)) are a; substrate-binding. The interval 330–549 (EMLQDDPRLR…EGAMSLHLQK (220 aa)) is b. Residues 550 to 626 (LLRQANQGSE…LTEVMGKGLI (77 aa)) are c.

This sequence belongs to the heat shock protein 90 family. Homodimer.

It localises to the cytoplasm. Its function is as follows. Molecular chaperone. Has ATPase activity. This Rhodospirillum rubrum (strain ATCC 11170 / ATH 1.1.1 / DSM 467 / LMG 4362 / NCIMB 8255 / S1) protein is Chaperone protein HtpG.